Here is a 429-residue protein sequence, read N- to C-terminus: MKLTIFKSLYFQVLTAITLGVLLGHFYPDIGAQMKPLGDGFVKLIKMIIAPVIFCTVVTGIAGMESMKAVGRTGAIALLYFEIVSTIALLIGLLIVNLVQPGAGMNIDPGTLDAKAVAVYAEQAQQQGIVPFLLDIIPGSVIGAFASGNILQVLLFAVLFGFALHRLGDKGQLIFNVIESFSRVIFGIINMIMRLAPLGAFGAMAFTIGKYGVGSLLQLGQLIACFYLTCILFVVVVLGSIARANGFSIFKFVRYIKEELLIVLGTSSSESVLPRMLDKMEKLGCKKSVVGLVIPTGYSFNLDGTSIYLTMAAVFIAQATNTHMDVIHQVTLLVVLLLSSKGAAGVTGSGFIVLAATISAVGHLPLAGLALILGIDRFMSEARALTNLVGNGVATVVVAKWCKQLDEKQLHDTLSNKPGSGADKTLPSA.

Helical transmembrane passes span 3–23, 44–64, 76–96, 142–162, 184–204, 222–242, 326–346, and 352–372; these read LTIFKSLYFQVLTAITLGVLL, LIKMIIAPVIFCTVVTGIAGM, IALLYFEIVSTIALLIGLLIV, IGAFASGNILQVLLFAVLFGF, VIFGIINMIMRLAPLGAFGAM, LIACFYLTCILFVVVVLGSIA, VIHQVTLLVVLLLSSKGAAGV, and IVLAATISAVGHLPLAGLALI.

This sequence belongs to the dicarboxylate/amino acid:cation symporter (DAACS) (TC 2.A.23) family.

It localises to the cell inner membrane. Responsible for the transport of dicarboxylates such as succinate, fumarate, and malate from the periplasm across the membrane. The sequence is that of C4-dicarboxylate transport protein from Serratia proteamaculans (strain 568).